The sequence spans 824 residues: Probable receptor-like protein kinase At5g24010 (824 aa).

The N-terminal stretch at 1-24 (MAFPINLTQTLLFFFCPLLHLSFA) is a signal peptide. 5 N-linked (GlcNAc...) asparagine glycosylation sites follow: Asn-6, Asn-41, Asn-204, Asn-227, and Asn-291. Residues 25–406 (AFTPTDNYLI…SSEVVSGKRN (382 aa)) lie on the Extracellular side of the membrane. A helical membrane pass occupies residues 407–427 (VVWIVVGSVLGGFVFLSLFFL). The Cytoplasmic segment spans residues 428–824 (SVLCLCRRKN…FSQLMTNAGR (397 aa)). The segment at 440-467 (TRSSESTGWTPLRRFRGSSNSRTTERTV) is disordered. The segment covering 456 to 467 (GSSNSRTTERTV) has biased composition (polar residues). The 276-residue stretch at 489 to 764 (FDRSLVIGVG…VLWNLEHVLQ (276 aa)) folds into the Protein kinase domain. ATP-binding positions include 495 to 503 (IGVGGFGMV) and Lys-517. Residue Asp-613 is the Proton acceptor of the active site. Residues 777-803 (DYGDVTDPRTARQGLSNGSNIERDYGD) form a disordered region.

The protein belongs to the protein kinase superfamily. Ser/Thr protein kinase family.

It localises to the membrane. The sequence is that of Probable receptor-like protein kinase At5g24010 from Arabidopsis thaliana (Mouse-ear cress).